Consider the following 458-residue polypeptide: 5-hydroxytryptamine receptor 2C (458 aa).

Residues 1 to 32 (MVNLRKAVHSFLVHLIGLLVWQCDISVSPVAA) form the signal peptide. The Extracellular portion of the chain corresponds to 33 to 55 (LVTDIFNTSDGGRFKFPDGVQNW). A helical membrane pass occupies residues 56-80 (PALSIVIIIILTIGGNILVIMAVSL). The Cytoplasmic segment spans residues 81–86 (EKKLHN). The chain crosses the membrane as a helical span at residues 87-111 (ATNYFLMSLAIADMLVGLLVMPLSL). At 112–128 (LAILYDYVWPLPRYLCP) the chain is on the extracellular side. The cysteines at positions 127 and 207 are disulfide-linked. A helical transmembrane segment spans residues 129 to 151 (VWISLDVLFSTASIMHLCAISLD). T139 serves as a coordination point for ergotamine. The DRY motif; important for ligand-induced conformation changes motif lies at 151-153 (DRY). Over 152–167 (RYVAIRNPVEHSRFNS) the chain is Cytoplasmic. A helical membrane pass occupies residues 168 to 189 (RTKAIMKIAIVWAISIGVSVPI). The Extracellular portion of the chain corresponds to 190-213 (PVIGLRDEEKVFVNNTTCVLNDPN). N-linked (GlcNAc...) asparagine glycans are attached at residues N203 and N204. L209 provides a ligand contact to ergotamine. Residues 214–236 (FVLIGSFVAFFIPLTIMVITYCL) traverse the membrane as a helical segment. Over 237–311 (TIHVLRRQAL…AINNERKASK (75 aa)) the chain is Cytoplasmic. Positions 272-301 (TEEENSANPNQDSNPRRRKKKERRPRGTMQ) are disordered. Positions 287 to 297 (RRRKKKERRPR) are enriched in basic residues. The helical transmembrane segment at 312–336 (VLGIVFFVFLVMWCPFFITNILSVL) threads the bilayer. C337 and C341 form a disulfide bridge. Over 337–347 (CGKACNQKLME) the chain is Extracellular. The chain crosses the membrane as a helical span at residues 348 to 370 (KLLNVFVWIGYVCSGINPLVYTL). An NPxxY motif; important for ligand-induced conformation changes and signaling motif is present at residues 364–368 (NPLVY). The Cytoplasmic segment spans residues 371–458 (FNKIYRRAFS…SVVSERISSV (88 aa)). Positions 456-458 (SSV) match the PDZ-binding motif.

Belongs to the G-protein coupled receptor 1 family. Interacts with MPDZ. Interacts with ARRB2. Interacts with MPP3; this interaction stabilizes the receptor at the plasma membrane and prevents the desensitization of the HTR2C receptor-mediated calcium response.

Its subcellular location is the cell membrane. G-protein coupled receptor for 5-hydroxytryptamine (serotonin). Also functions as a receptor for various drugs and psychoactive substances, including ergot alkaloid derivatives, 1-2,5,-dimethoxy-4-iodophenyl-2-aminopropane (DOI) and lysergic acid diethylamide (LSD). Ligand binding causes a conformation change that triggers signaling via guanine nucleotide-binding proteins (G proteins) and modulates the activity of downstream effectors. HTR2C is coupled to G(q)/G(11) G alpha proteins and activates phospholipase C-beta, releasing diacylglycerol (DAG) and inositol 1,4,5-trisphosphate (IP3) second messengers that modulate the activity of phosphatidylinositol 3-kinase and promote the release of Ca(2+) ions from intracellular stores, respectively. Beta-arrestin family members inhibit signaling via G proteins and mediate activation of alternative signaling pathways. Regulates neuronal activity via the activation of short transient receptor potential calcium channels in the brain, and thereby modulates the activation of pro-opiomelanocortin neurons and the release of CRH that then regulates the release of corticosterone. Plays a role in the regulation of appetite and eating behavior, responses to anxiogenic stimuli and stress. Plays a role in insulin sensitivity and glucose homeostasis. The protein is 5-hydroxytryptamine receptor 2C of Canis lupus familiaris (Dog).